Consider the following 701-residue polypeptide: Sulfate anion transporter 1 (701 aa).

Residues 1 to 20 are disordered; that stretch reads MDESPEPLQQGRGPVPVRRQ. Helical transmembrane passes span 68–90 and 94–116; these read YLAG…AIAY and AGLQ…FLMG. Residues Asn-158 and Asn-163 are each glycosylated (N-linked (GlcNAc...) asparagine). 7 helical membrane passes run 176 to 198, 255 to 277, 290 to 309, 342 to 364, 377 to 399, 412 to 434, and 472 to 494; these read YAIR…MGVL, GAGQ…LLAA, VPLP…SHFG, ALDA…EMFA, LLAV…SAAL, TQLS…APLF, and LVWA…LAGV. An STAS domain is found at 527 to 687; it reads EFEGLVPEPG…LSVHDAVQTA (161 aa).

This sequence belongs to the SLC26A/SulP transporter (TC 2.A.53) family. In terms of tissue distribution, expressed most abundantly in the kidney and liver, with lower levels in the pancreas, testis, brain, small intestine, colon, and lung.

Its subcellular location is the cell membrane. It is found in the basolateral cell membrane. The enzyme catalyses thiosulfate(in) + sulfate(out) = thiosulfate(out) + sulfate(in). The catalysed reaction is 2 hydrogencarbonate(out) + sulfate(in) = 2 hydrogencarbonate(in) + sulfate(out). It carries out the reaction oxalate(in) + sulfate(out) = oxalate(out) + sulfate(in). It catalyses the reaction oxalate(in) + 2 hydrogencarbonate(out) = oxalate(out) + 2 hydrogencarbonate(in). Its function is as follows. Sodium-independent sulfate anion transporter. Can transport other anions including bicarbonate, thiosulfate and oxalate by mediating sulfate-thiosulfate, sulfate-hydrogencarbonate and sulfate-oxalate anion exchange. Mediates oxalate-hydrogencarbonate anion exchange. In Homo sapiens (Human), this protein is Sulfate anion transporter 1 (SLC26A1).